A 182-amino-acid chain; its full sequence is Crossover junction endodeoxyribonuclease RuvC (182 aa).

Active-site residues include D7, E69, and D141. 3 residues coordinate Mg(2+): D7, E69, and D141.

Belongs to the RuvC family. As to quaternary structure, homodimer which binds Holliday junction (HJ) DNA. The HJ becomes 2-fold symmetrical on binding to RuvC with unstacked arms; it has a different conformation from HJ DNA in complex with RuvA. In the full resolvosome a probable DNA-RuvA(4)-RuvB(12)-RuvC(2) complex forms which resolves the HJ. The cofactor is Mg(2+).

The protein localises to the cytoplasm. The enzyme catalyses Endonucleolytic cleavage at a junction such as a reciprocal single-stranded crossover between two homologous DNA duplexes (Holliday junction).. In terms of biological role, the RuvA-RuvB-RuvC complex processes Holliday junction (HJ) DNA during genetic recombination and DNA repair. Endonuclease that resolves HJ intermediates. Cleaves cruciform DNA by making single-stranded nicks across the HJ at symmetrical positions within the homologous arms, yielding a 5'-phosphate and a 3'-hydroxyl group; requires a central core of homology in the junction. The consensus cleavage sequence is 5'-(A/T)TT(C/G)-3'. Cleavage occurs on the 3'-side of the TT dinucleotide at the point of strand exchange. HJ branch migration catalyzed by RuvA-RuvB allows RuvC to scan DNA until it finds its consensus sequence, where it cleaves and resolves the cruciform DNA. This chain is Crossover junction endodeoxyribonuclease RuvC, found in Polaromonas naphthalenivorans (strain CJ2).